We begin with the raw amino-acid sequence, 30 residues long: uncharacterized protein (30 aa).

The N-terminal stretch at 1-22 (MRFLFFLPPSFITSFLYLALYS) is a signal peptide.

This is an uncharacterized protein from Schizosaccharomyces pombe (strain 972 / ATCC 24843) (Fission yeast).